The chain runs to 763 residues: Phosphoglycerol transferase I (763 aa).

4 helical membrane passes run 4 to 19 (LLSF…IYAW), 26 to 48 (WWFA…LFAS), 76 to 98 (YILP…GWIL), and 105 to 127 (PHHF…ASPA).

This sequence belongs to the OpgB family.

It is found in the cell inner membrane. It carries out the reaction a phosphatidylglycerol + a membrane-derived-oligosaccharide D-glucose = a 1,2-diacyl-sn-glycerol + a membrane-derived-oligosaccharide 6-(glycerophospho)-D-glucose.. It functions in the pathway glycan metabolism; osmoregulated periplasmic glucan (OPG) biosynthesis. In terms of biological role, transfers a phosphoglycerol residue from phosphatidylglycerol to the membrane-bound nascent glucan backbones. This is Phosphoglycerol transferase I from Escherichia coli O6:H1 (strain CFT073 / ATCC 700928 / UPEC).